A 622-amino-acid chain; its full sequence is Prothrombin (622 aa).

A signal peptide spans 1–24; sequence MAHVRGLQLPGCLALAALCSLVHS. A propeptide spanning residues 25 to 43 is cleaved from the precursor; the sequence is QHVFLAPQQARSLLQRVRR. The region spanning 44–89 is the Gla domain; that stretch reads ANTFLEEVRKGNLERECVEETCSYEEAFEALESSTATDVFWAKYTA. 4-carboxyglutamate is present on residues glutamate 49, glutamate 50, glutamate 57, glutamate 59, glutamate 62, glutamate 63, glutamate 68, glutamate 69, glutamate 72, and glutamate 75. The cysteines at positions 60 and 65 are disulfide-linked. 11 cysteine pairs are disulfide-bonded: cysteine 90–cysteine 103, cysteine 108–cysteine 186, cysteine 129–cysteine 169, cysteine 157–cysteine 181, cysteine 213–cysteine 291, cysteine 234–cysteine 274, cysteine 262–cysteine 286, cysteine 336–cysteine 482, cysteine 391–cysteine 407, cysteine 536–cysteine 550, and cysteine 564–cysteine 594. 2 consecutive Kringle domains span residues 108-186 and 213-291; these read CAEG…IPVC and CVPD…LNYC. N-linked (GlcNAc...) (complex) asparagine glycans are attached at residues asparagine 121 and asparagine 143. Residues 364–618 enclose the Peptidase S1 domain; sequence IVEGSDAEIG…LKKWIQKVID (255 aa). Histidine 406 acts as the Charge relay system in catalysis. A glycan (N-linked (GlcNAc...) (complex) asparagine) is linked at asparagine 416. Aspartate 462 acts as the Charge relay system in catalysis. Residues 551 to 573 are high affinity receptor-binding region which is also known as the TP508 peptide; the sequence is AGYKPDEGKRGDACEGDSGGPFV. The active-site Charge relay system is the serine 568.

Belongs to the peptidase S1 family. In terms of assembly, heterodimer (named alpha-thrombin) of a light and a heavy chain; disulfide-linked. Forms a heterodimer with SERPINA5. In plasma, interacts (via N-terminus) with alpha-1-microglobulin with molar ratio 1:2 and 1:1; this interaction does not prevent the activation of prothrombin to thrombin. Interacts (thrombin) with iripin-8, a serine protease inhibitor from Ixodes ricinus saliva. Interacts (thrombin) with iripin-3, a serine protease inhibitor from Ixodes ricinus saliva. Interacts (thrombin) with Anopheles albimanus salivary thrombin inhibitor anophelin; the interaction results in thrombin inhibition. Interacts (thrombin) with Anopheles gambiae salivary thrombin inhibitor anophelin; the interaction results in thrombin inhibition. Interacts (thrombin) with Amblyomma variegatum variegin; the interaction results in thrombin inhibition. Interacts (thrombin) with Xenopsylla cheopis salivary thrombin inhibitor XC-42. Interacts (thrombin) with Xenopsylla cheopis salivary thrombin inhibitor XC-43. Post-translationally, the gamma-carboxyglutamyl residues, which bind calcium ions, result from the carboxylation of glutamyl residues by a microsomal enzyme, the vitamin K-dependent carboxylase. The modified residues are necessary for the calcium-dependent interaction with a negatively charged phospholipid surface, which is essential for the conversion of prothrombin to thrombin. In terms of processing, N-glycosylated. N-glycan heterogeneity at Asn-121: Hex3HexNAc3 (minor), Hex4HexNAc3 (minor) and Hex5HexNAc4 (major). At Asn-143: Hex4HexNAc3 (minor) and Hex5HexNAc4 (major). In the penultimate step of the coagulation cascade, prothrombin is converted to thrombin by the prothrombinase complex composed of factor Xa (F10), cofactor Va (F5), and phospholipids. This activation requires factor Xa-catalyzed sequential cleavage at 2 sites, Arg-314 and Arg-363, along 2 possible pathways. In the first pathway, the first cleavage occurs at Arg-314, leading to the formation of the inactive intermediate prethrombin-2. This pathway preferentially occurs on platelets and in the absence of cofactor Va. In the second pathway, the first cleavage occurs at Arg-363, which separates protease domain into 2 chains that remain connected through a disulfide bond and generates the active intermediate meizothrombin. The presence of cofactor Va directs activation along the meizothrombin pathway and greatly accelerates the rate of cleavage at Arg-363, but has a smaller effect on the cleavage of meizothrombin at Arg-314. Meizothrombin accumulates as an intermediate when prothrombinase is assembled on the membrane of red blood cells. In terms of tissue distribution, expressed by the liver and secreted in plasma.

Its subcellular location is the secreted. It localises to the extracellular space. The enzyme catalyses Selective cleavage of Arg-|-Gly bonds in fibrinogen to form fibrin and release fibrinopeptides A and B.. Activity is promoted in the presence of negatively charged surfaces, such as polyphosphate and dextran sulfate. Inhibited by SERPINA5. Its function is as follows. Thrombin, which cleaves bonds after Arg and Lys, converts fibrinogen to fibrin and activates factors V, VII, VIII, XIII, and, in complex with thrombomodulin, protein C. Functions in blood homeostasis, inflammation and wound healing. Activates coagulation factor XI (F11); activation is promoted by the contact with negatively charged surfaces. Triggers the production of pro-inflammatory cytokines, such as MCP-1/CCL2 and IL8/CXCL8, in endothelial cells. The polypeptide is Prothrombin (F2) (Homo sapiens (Human)).